The following is a 440-amino-acid chain: Serine hydroxymethyltransferase (440 aa).

Residues Leu-119 and 123-125 (GHL) contribute to the (6S)-5,6,7,8-tetrahydrofolate site. Lys-228 is modified (N6-(pyridoxal phosphate)lysine). 370-372 (SPF) is a binding site for (6S)-5,6,7,8-tetrahydrofolate.

Belongs to the SHMT family. Homodimer. Requires pyridoxal 5'-phosphate as cofactor.

Its subcellular location is the cytoplasm. It carries out the reaction (6R)-5,10-methylene-5,6,7,8-tetrahydrofolate + glycine + H2O = (6S)-5,6,7,8-tetrahydrofolate + L-serine. It participates in one-carbon metabolism; tetrahydrofolate interconversion. It functions in the pathway amino-acid biosynthesis; glycine biosynthesis; glycine from L-serine: step 1/1. In terms of biological role, catalyzes the reversible interconversion of serine and glycine with tetrahydrofolate (THF) serving as the one-carbon carrier. This reaction serves as the major source of one-carbon groups required for the biosynthesis of purines, thymidylate, methionine, and other important biomolecules. Also exhibits THF-independent aldolase activity toward beta-hydroxyamino acids, producing glycine and aldehydes, via a retro-aldol mechanism. The polypeptide is Serine hydroxymethyltransferase (Chlorobaculum parvum (strain DSM 263 / NCIMB 8327) (Chlorobium vibrioforme subsp. thiosulfatophilum)).